A 484-amino-acid polypeptide reads, in one-letter code: Adenylosuccinate lyase (484 aa).

The residue at position 2 (alanine 2) is an N-acetylalanine. Substrate-binding positions include 20 to 21, 85 to 87, and 111 to 112; these read RY, RHD, and TS. Lysine 147 is modified (N6-acetyllysine). Histidine 159 (proton donor/acceptor) is an active-site residue. Glutamine 241 is a binding site for substrate. The active-site Proton donor/acceptor is serine 289. The residue at position 295 (lysine 295) is an N6-acetyllysine. Residues arginine 303, arginine 329, serine 334, and arginine 338 each contribute to the substrate site. Lysine 415 is covalently cross-linked (Glycyl lysine isopeptide (Lys-Gly) (interchain with G-Cter in SUMO1)).

Belongs to the lyase 1 family. Adenylosuccinate lyase subfamily. Homotetramer. Residues from neighboring subunits contribute catalytic and substrate-binding residues to each active site. Ubiquitously expressed. Both isoforms are produced by all tissues. Isoform 2 is 10-fold less abundant than isoform 1.

The catalysed reaction is N(6)-(1,2-dicarboxyethyl)-AMP = fumarate + AMP. The enzyme catalyses (2S)-2-[5-amino-1-(5-phospho-beta-D-ribosyl)imidazole-4-carboxamido]succinate = 5-amino-1-(5-phospho-beta-D-ribosyl)imidazole-4-carboxamide + fumarate. Its pathway is purine metabolism; AMP biosynthesis via de novo pathway; AMP from IMP: step 2/2. It participates in purine metabolism; IMP biosynthesis via de novo pathway; 5-amino-1-(5-phospho-D-ribosyl)imidazole-4-carboxamide from 5-amino-1-(5-phospho-D-ribosyl)imidazole-4-carboxylate: step 2/2. The enzyme reaction kinetics indicate cooperativity between subunits. Its function is as follows. Catalyzes two non-sequential steps in de novo AMP synthesis: converts (S)-2-(5-amino-1-(5-phospho-D-ribosyl)imidazole-4-carboxamido)succinate (SAICAR) to fumarate plus 5-amino-1-(5-phospho-D-ribosyl)imidazole-4-carboxamide, and thereby also contributes to de novo IMP synthesis, and converts succinyladenosine monophosphate (SAMP) to AMP and fumarate. This is Adenylosuccinate lyase (ADSL) from Homo sapiens (Human).